We begin with the raw amino-acid sequence, 896 residues long: Protein translocase subunit SecA (896 aa).

ATP-binding positions include Gln87, 105–109, and Asp507; that span reads GEGKT. Positions 853 to 879 are disordered; it reads ESLSENDEASETQTFRRQEKKIGRNDP. The span at 866–876 shows a compositional bias: basic and acidic residues; it reads TFRRQEKKIGR. The Zn(2+) site is built by Cys880, Cys882, Cys891, and His892.

It belongs to the SecA family. In terms of assembly, monomer and homodimer. Part of the essential Sec protein translocation apparatus which comprises SecA, SecYEG and auxiliary proteins SecDF-YajC and YidC. Zn(2+) is required as a cofactor.

The protein resides in the cell inner membrane. The protein localises to the cytoplasm. It carries out the reaction ATP + H2O + cellular proteinSide 1 = ADP + phosphate + cellular proteinSide 2.. Functionally, part of the Sec protein translocase complex. Interacts with the SecYEG preprotein conducting channel. Has a central role in coupling the hydrolysis of ATP to the transfer of proteins into and across the cell membrane, serving both as a receptor for the preprotein-SecB complex and as an ATP-driven molecular motor driving the stepwise translocation of polypeptide chains across the membrane. This chain is Protein translocase subunit SecA, found in Legionella pneumophila subsp. pneumophila (strain Philadelphia 1 / ATCC 33152 / DSM 7513).